Consider the following 867-residue polypeptide: Zinc finger protein zfp-1 (867 aa).

The segment at 5–57 adopts a PHD-type 1 zinc-finger fold; that stretch reads VGGCCVCADENGWTDNPLIYCDGENCEVAVHQGCYGIQEVPEGEWFCAKCTKA. Residues 69-102 form a C2HC pre-PHD-type 2 zinc finger; the sequence is TFCCQLCPFDYGALKKTDRNGWAHVICALYIPEV. Residues 69-186 form an extended PHD2 domain (ePHD2) region; that stretch reads TFCCQLCPFD…KYCGYCENHL (118 aa). Residues 125-186 form a PHD-type 2 zinc finger; that stretch reads KLCYICNEER…KYCGYCENHL (62 aa). Disordered regions lie at residues 267 to 311, 440 to 477, 503 to 586, and 753 to 773; these read GSTV…SLSS, KNDMMDKTHKRPRANARPPAVLGSMSSGSSGGTVGKSP, ADRT…QSNR, and SSGAPVNSNIQNHRATPSTAG. The segment covering 285–311 has biased composition (polar residues); the sequence is PLTTSSRSSVAQDPSPPLTINKNSLSS. The span at 503 to 512 shows a compositional bias: basic and acidic residues; sequence ADRTAAERRA. Polar residues predominate over residues 516 to 527; the sequence is QSQPSTSTNGGP. Residues 538 to 550 are compositionally biased toward low complexity; that stretch reads HTNSTNSTNHQNN. Polar residues predominate over residues 551 to 573; the sequence is GLTQNAPASTSMQAGTSSNDGVI. Over residues 574 to 585 the composition is skewed to low complexity; it reads SQNGTSSTSQSN. Over residues 758-771 the composition is skewed to polar residues; the sequence is VNSNIQNHRATPST.

As to quaternary structure, multimer; in vitro. Interacts (via C-terminus) with dot-1.1 to form a heterodimer known as the zfp-1-dot-1.1 complex or DotCom complex. In terms of tissue distribution, isoform a: Expressed at high levels in maturing oocytes, but at low levels in the rest of the germ line (at protein level). Isoform a: Not expressed in the pharynx, germ line and tail. Isoform c: Not expressed in the germ line (at protein level). Isoform c: Uniformly expressed.

The protein localises to the nucleus. The protein resides in the chromosome. Functionally, recruits the histone methyltransferase dot-1.1 to chromatin to methylate 'Lys-79' of histone H3 and activate transcription. Recognizes and binds histone H3 methylated at 'Lys-4' (H3K4me) at the promoters of target genes. During stress, the zfp-1-dot-1.1 complex also plays a role in the deubiquitination of histone H2B sites, which negatively modulates the RNA polymerase II-induced transcription of highly expressed genes. In response to stress, binds to the pdk-1 promoter to negatively regulate pdk-1 expression, which negatively modulates daf-16/FOXO-mediated gene expression. Thus, most likely via this mechanism, in response to stress, it confers a protective role against neuronal necrosis. Plays a role in Insulin/IGF-1-like signaling (IIS)- and diet restriction-mediated lifespan extension by controlling daf-16/FOXO and pha-4/FOXA recruitment to target promoters. May negatively regulate the expression of genes required for vulval development. May play a role in axon guidance in D-type motor neurons. May suppress sensitivity to RNAi. Required for migration of HSN motor neurons during embryogenesis. This is Zinc finger protein zfp-1 from Caenorhabditis elegans.